We begin with the raw amino-acid sequence, 155 residues long: Small ribosomal subunit protein bS16 (155 aa).

Residues Ala113 to Glu155 form a disordered region. Residues Ala136 to Ala146 are compositionally biased toward acidic residues.

The protein belongs to the bacterial ribosomal protein bS16 family.

This Mycobacteroides abscessus (strain ATCC 19977 / DSM 44196 / CCUG 20993 / CIP 104536 / JCM 13569 / NCTC 13031 / TMC 1543 / L948) (Mycobacterium abscessus) protein is Small ribosomal subunit protein bS16.